A 364-amino-acid chain; its full sequence is GTPase Obg (364 aa).

The 159-residue stretch at 1-159 (MKFLDEAKVY…KTIWLHLKLI (159 aa)) folds into the Obg domain. Residues 160-327 (ADAGLVGLPN…VLRALRDIIV (168 aa)) enclose the OBG-type G domain. GTP is bound by residues 166–173 (GLPNAGKS), 191–195 (FTTLH), 212–215 (DIPG), 279–282 (SQID), and 308–310 (SAV). The Mg(2+) site is built by Ser173 and Thr193. Residues 333-364 (EKPAKVPKLRHRDMVVTDEGEDKGGDEGDDQP) are disordered.

It belongs to the TRAFAC class OBG-HflX-like GTPase superfamily. OBG GTPase family. In terms of assembly, monomer. Requires Mg(2+) as cofactor.

It is found in the cytoplasm. An essential GTPase which binds GTP, GDP and possibly (p)ppGpp with moderate affinity, with high nucleotide exchange rates and a fairly low GTP hydrolysis rate. Plays a role in control of the cell cycle, stress response, ribosome biogenesis and in those bacteria that undergo differentiation, in morphogenesis control. In Rhizobium johnstonii (strain DSM 114642 / LMG 32736 / 3841) (Rhizobium leguminosarum bv. viciae), this protein is GTPase Obg.